Here is a 308-residue protein sequence, read N- to C-terminus: 1D-myo-inositol 2-acetamido-2-deoxy-alpha-D-glucopyranoside deacetylase (308 aa).

Zn(2+) contacts are provided by histidine 37, aspartate 40, and histidine 171.

This sequence belongs to the MshB deacetylase family. Requires Zn(2+) as cofactor.

It carries out the reaction 1D-myo-inositol 2-acetamido-2-deoxy-alpha-D-glucopyranoside + H2O = 1D-myo-inositol 2-amino-2-deoxy-alpha-D-glucopyranoside + acetate. Catalyzes the deacetylation of 1D-myo-inositol 2-acetamido-2-deoxy-alpha-D-glucopyranoside (GlcNAc-Ins) in the mycothiol biosynthesis pathway. In Mycobacterium sp. (strain KMS), this protein is 1D-myo-inositol 2-acetamido-2-deoxy-alpha-D-glucopyranoside deacetylase.